A 139-amino-acid chain; its full sequence is Ribonuclease VapC36 (139 aa).

Positions 1-127 (MIVDTSAVVA…GNDFPQTDLE (127 aa)) constitute a PINc domain. Positions 4 and 100 each coordinate Mg(2+).

It belongs to the PINc/VapC protein family. Mg(2+) serves as cofactor.

Its function is as follows. Toxic component of a type II toxin-antitoxin (TA) system. An RNase. Its cognate antitoxin is VapB36. This chain is Ribonuclease VapC36, found in Mycobacterium tuberculosis (strain ATCC 25618 / H37Rv).